The chain runs to 362 residues: ATPase ARSA2 (362 aa).

27–34 (KGGVGKTT) is a binding site for ATP. Residue Asp58 is part of the active site. Residues Glu235 and Asn262 each contribute to the ATP site.

It belongs to the arsA ATPase family. As to quaternary structure, homodimer. Interacts with SEC61B.

It localises to the cytoplasm. The protein resides in the cytosol. The protein localises to the endoplasmic reticulum. Its function is as follows. ATPase required for the post-translational delivery of tail-anchored (TA) proteins to the endoplasmic reticulum. Recognizes and selectively binds the transmembrane domain of TA proteins in the cytosol. This complex then targets to the endoplasmic reticulum by membrane-bound receptors, where the tail-anchored protein is released for insertion. This process is regulated by ATP binding and hydrolysis. ATP binding drives the homodimer towards the closed dimer state, facilitating recognition of newly synthesized TA membrane proteins. ATP hydrolysis is required for insertion. Subsequently, the homodimer reverts towards the open dimer state, lowering its affinity for the membrane-bound receptor, and returning it to the cytosol to initiate a new round of targeting. In Chlamydomonas reinhardtii (Chlamydomonas smithii), this protein is ATPase ARSA2.